The primary structure comprises 164 residues: OV-17 antigen (164 aa).

An N-terminal signal peptide occupies residues 1-16; it reads MKFVILLTIGLLVVAA. The interval 24 to 43 is disordered; sequence QQQQQQQQQRDEREIPPFLE.

This sequence belongs to the SXP/RAL-2 family. In terms of tissue distribution, high levels in the hypodermal layer of the adult female.

In Onchocerca volvulus, this protein is OV-17 antigen (OV17).